A 332-amino-acid polypeptide reads, in one-letter code: Hygromycin-B 7''-O-kinase (332 aa).

D223 (proton acceptor) is an active-site residue.

It belongs to the aminoglycoside phosphotransferase family.

The catalysed reaction is hygromycin B + ATP = 7''-O-phosphohygromycin B + ADP + H(+). Functionally, the aminoglycoside phosphotransferases achieve inactivation of their antibiotic substrates by phosphorylation. This is Hygromycin-B 7''-O-kinase (hyg) from Streptomyces hygroscopicus.